Consider the following 370-residue polypeptide: Mitogen-activated protein kinase mpkC (370 aa).

Positions 19–298 constitute a Protein kinase domain; it reads YANVRPVGLG…AAESLEHPYL (280 aa). ATP is bound by residues 25–33 and Lys-48; that span reads VGLGAFGLV. Residue Asp-140 is the Proton acceptor of the active site. Position 170 is a phosphothreonine (Thr-170). The TXY signature appears at 170–172; sequence TGY. A Phosphotyrosine modification is found at Tyr-172.

Belongs to the protein kinase superfamily. Ser/Thr protein kinase family. MAP kinase subfamily. HOG1 sub-subfamily. The cofactor is Mg(2+). Post-translationally, dually phosphorylated on Thr-170 and Tyr-172, which activates the enzyme.

The enzyme catalyses L-seryl-[protein] + ATP = O-phospho-L-seryl-[protein] + ADP + H(+). It catalyses the reaction L-threonyl-[protein] + ATP = O-phospho-L-threonyl-[protein] + ADP + H(+). Activated by tyrosine and threonine phosphorylation. Its function is as follows. Mitogen-activated protein kinase required for growth on media where sorbitol or mannitol is the sole carbon source. The polypeptide is Mitogen-activated protein kinase mpkC (mpkC) (Aspergillus terreus (strain NIH 2624 / FGSC A1156)).